A 292-amino-acid chain; its full sequence is MQKSGIFILNKPSNISTYQLINQVKKKLNIKKVGHCGTLDLLATGVVICLVNNATKISDYLLNANKAYQVKIKLFTLTDSFDAEGNIIQTQTPFNISLDQINKVISKYNNYTYNQYPPIYSSIKVDGKKLYEYALTNQNVEIKSRKVTIYKTSLLSYDQKNYEIFLDVKCSKGTYIRSLAVDICKDLNTIGYVVYLNRTLSGNFKLENAIDLNNISWDHLISINDAIRTNDFKVVKYQNSLEIIQGKKIILNDINDDLVFISDDQNNILAVYQKYDNNIFKIKRGGLNNDIY.

D40 acts as the Nucleophile in catalysis.

The protein belongs to the pseudouridine synthase TruB family. Type 1 subfamily.

The enzyme catalyses uridine(55) in tRNA = pseudouridine(55) in tRNA. Responsible for synthesis of pseudouridine from uracil-55 in the psi GC loop of transfer RNAs. In Mycoplasma mycoides subsp. mycoides SC (strain CCUG 32753 / NCTC 10114 / PG1), this protein is tRNA pseudouridine synthase B.